The primary structure comprises 164 residues: Xanthine-guanine phosphoribosyltransferase (164 aa).

5-phospho-alpha-D-ribose 1-diphosphate contacts are provided by residues 41-42 (RG) and 98-106 (DDLTDTGKT). Aspartate 99 is a Mg(2+) binding site. Positions 102 and 145 each coordinate guanine. Positions 102 and 145 each coordinate xanthine. GMP-binding positions include 102 to 106 (DTGKT) and 144 to 145 (WI).

Belongs to the purine/pyrimidine phosphoribosyltransferase family. XGPT subfamily. As to quaternary structure, homotetramer. Requires Mg(2+) as cofactor.

It is found in the cell inner membrane. The catalysed reaction is GMP + diphosphate = guanine + 5-phospho-alpha-D-ribose 1-diphosphate. The enzyme catalyses XMP + diphosphate = xanthine + 5-phospho-alpha-D-ribose 1-diphosphate. It catalyses the reaction IMP + diphosphate = hypoxanthine + 5-phospho-alpha-D-ribose 1-diphosphate. Its pathway is purine metabolism; GMP biosynthesis via salvage pathway; GMP from guanine: step 1/1. It participates in purine metabolism; XMP biosynthesis via salvage pathway; XMP from xanthine: step 1/1. Its function is as follows. Purine salvage pathway enzyme that catalyzes the transfer of the ribosyl-5-phosphate group from 5-phospho-alpha-D-ribose 1-diphosphate (PRPP) to the N9 position of the 6-oxopurines guanine and xanthine to form the corresponding ribonucleotides GMP (guanosine 5'-monophosphate) and XMP (xanthosine 5'-monophosphate), with the release of PPi. To a lesser extent, also acts on hypoxanthine. The protein is Xanthine-guanine phosphoribosyltransferase of Rhizobium johnstonii (strain DSM 114642 / LMG 32736 / 3841) (Rhizobium leguminosarum bv. viciae).